A 476-amino-acid chain; its full sequence is Bifunctional protein HldE (476 aa).

The tract at residues methionine 1–glycine 319 is ribokinase. Residue asparagine 195–glutamate 198 participates in ATP binding. Aspartate 264 is a catalytic residue. Residues methionine 344–aspartate 476 are cytidylyltransferase.

The protein in the N-terminal section; belongs to the carbohydrate kinase PfkB family. This sequence in the C-terminal section; belongs to the cytidylyltransferase family. As to quaternary structure, homodimer.

It catalyses the reaction D-glycero-beta-D-manno-heptose 7-phosphate + ATP = D-glycero-beta-D-manno-heptose 1,7-bisphosphate + ADP + H(+). The catalysed reaction is D-glycero-beta-D-manno-heptose 1-phosphate + ATP + H(+) = ADP-D-glycero-beta-D-manno-heptose + diphosphate. The protein operates within nucleotide-sugar biosynthesis; ADP-L-glycero-beta-D-manno-heptose biosynthesis; ADP-L-glycero-beta-D-manno-heptose from D-glycero-beta-D-manno-heptose 7-phosphate: step 1/4. Its pathway is nucleotide-sugar biosynthesis; ADP-L-glycero-beta-D-manno-heptose biosynthesis; ADP-L-glycero-beta-D-manno-heptose from D-glycero-beta-D-manno-heptose 7-phosphate: step 3/4. In terms of biological role, catalyzes the phosphorylation of D-glycero-D-manno-heptose 7-phosphate at the C-1 position to selectively form D-glycero-beta-D-manno-heptose-1,7-bisphosphate. Functionally, catalyzes the ADP transfer from ATP to D-glycero-beta-D-manno-heptose 1-phosphate, yielding ADP-D-glycero-beta-D-manno-heptose. The protein is Bifunctional protein HldE of Actinobacillus succinogenes (strain ATCC 55618 / DSM 22257 / CCUG 43843 / 130Z).